The primary structure comprises 534 residues: CD276 antigen (534 aa).

An N-terminal signal peptide occupies residues 1-28; it reads MLRRRGSPGMGVHVGAALGALWFCLTGA. In terms of domain architecture, Ig-like V-type 1 spans 29 to 139; sequence LEVQVPEDPV…GSAAVSLQVA (111 aa). Residues 29–466 lie on the Extracellular side of the membrane; that stretch reads LEVQVPEDPV…GQPMTFPPEA (438 aa). 4 disulfide bridges follow: cysteine 50–cysteine 122, cysteine 165–cysteine 220, cysteine 268–cysteine 340, and cysteine 383–cysteine 438. 6 N-linked (GlcNAc...) asparagine glycosylation sites follow: asparagine 104, asparagine 189, asparagine 215, asparagine 322, asparagine 407, and asparagine 433. Positions 145–238 constitute an Ig-like C2-type 1 domain; that stretch reads PSMTLEPNKD…QDAHSSVTIT (94 aa). An Ig-like V-type 2 domain is found at 243–357; the sequence is PTGAVEVQVP…GSAAVSLQVA (115 aa). In terms of domain architecture, Ig-like C2-type 2 spans 363-456; that stretch reads PSMTLEPNKD…QDAHGSVTIT (94 aa). A helical membrane pass occupies residues 467-487; that stretch reads LWVTVGLSVCLIALLVALAFV. At 488–534 the chain is on the cytoplasmic side; it reads CWRKIKQSCEEENAGAEDQDGEGEGSKTALQPLKHSDSKEDDGQEIA. The segment covering 498–510 has biased composition (acidic residues); sequence EENAGAEDQDGEG. The tract at residues 498–534 is disordered; the sequence is EENAGAEDQDGEGEGSKTALQPLKHSDSKEDDGQEIA. Serine 525 is subject to Phosphoserine.

This sequence belongs to the immunoglobulin superfamily. BTN/MOG family. In terms of assembly, interacts with TREML2 and this interaction enhances T-cell activation. In terms of tissue distribution, ubiquitous but not detectable in peripheral blood lymphocytes or granulocytes. Weakly expressed in resting monocytes. Expressed in dendritic cells derived from monocytes. Expressed in epithelial cells of sinonasal tissue. Expressed in extravillous trophoblast cells and Hofbauer cells of the first trimester placenta and term placenta.

Its subcellular location is the membrane. Functionally, may participate in the regulation of T-cell-mediated immune response. May play a protective role in tumor cells by inhibiting natural-killer mediated cell lysis as well as a role of marker for detection of neuroblastoma cells. May be involved in the development of acute and chronic transplant rejection and in the regulation of lymphocytic activity at mucosal surfaces. Could also play a key role in providing the placenta and fetus with a suitable immunological environment throughout pregnancy. Both isoform 1 and isoform 2 appear to be redundant in their ability to modulate CD4 T-cell responses. Isoform 2 is shown to enhance the induction of cytotoxic T-cells and selectively stimulates interferon gamma production in the presence of T-cell receptor signaling. The protein is CD276 antigen (CD276) of Homo sapiens (Human).